The sequence spans 148 residues: Low molecular weight protein-tyrosine-phosphatase Etp (148 aa).

Cys-13 functions as the Nucleophile in the catalytic mechanism. Residue Arg-19 is part of the active site. Asp-119 serves as the catalytic Proton donor.

This sequence belongs to the low molecular weight phosphotyrosine protein phosphatase family.

It carries out the reaction O-phospho-L-tyrosyl-[protein] + H2O = L-tyrosyl-[protein] + phosphate. Functionally, dephosphorylates etk. The protein is Low molecular weight protein-tyrosine-phosphatase Etp (etp) of Escherichia coli O157:H7.